Reading from the N-terminus, the 167-residue chain is NAD(P)H-quinone oxidoreductase subunit I, chloroplastic (167 aa).

2 consecutive 4Fe-4S ferredoxin-type domains span residues G55 to K84 and L95 to E124. Residues C64, C67, C70, C74, C104, C107, C110, and C114 each contribute to the [4Fe-4S] cluster site.

It belongs to the complex I 23 kDa subunit family. In terms of assembly, NDH is composed of at least 16 different subunits, 5 of which are encoded in the nucleus. It depends on [4Fe-4S] cluster as a cofactor.

It is found in the plastid. Its subcellular location is the chloroplast thylakoid membrane. It carries out the reaction a plastoquinone + NADH + (n+1) H(+)(in) = a plastoquinol + NAD(+) + n H(+)(out). It catalyses the reaction a plastoquinone + NADPH + (n+1) H(+)(in) = a plastoquinol + NADP(+) + n H(+)(out). NDH shuttles electrons from NAD(P)H:plastoquinone, via FMN and iron-sulfur (Fe-S) centers, to quinones in the photosynthetic chain and possibly in a chloroplast respiratory chain. The immediate electron acceptor for the enzyme in this species is believed to be plastoquinone. Couples the redox reaction to proton translocation, and thus conserves the redox energy in a proton gradient. The protein is NAD(P)H-quinone oxidoreductase subunit I, chloroplastic of Draba nemorosa (Woodland whitlowgrass).